The following is a 142-amino-acid chain: Large ribosomal subunit protein uL11 (142 aa).

It belongs to the universal ribosomal protein uL11 family. Part of the ribosomal stalk of the 50S ribosomal subunit. Interacts with L10 and the large rRNA to form the base of the stalk. L10 forms an elongated spine to which L12 dimers bind in a sequential fashion forming a multimeric L10(L12)X complex. Post-translationally, one or more lysine residues are methylated.

Its function is as follows. Forms part of the ribosomal stalk which helps the ribosome interact with GTP-bound translation factors. The chain is Large ribosomal subunit protein uL11 from Acinetobacter baylyi (strain ATCC 33305 / BD413 / ADP1).